We begin with the raw amino-acid sequence, 156 residues long: MPRKGPAPKRPLINDPVYGSPLVTQLVNKILLDGKKSTAERIVYEALEVAREKTGTDPVVTLKRALDNVKPALEVRSRRVGGATYQVPVEVRPGRSTTLALRWLVTFSRQRREKTMVERLANELLDASNGLGAAVKRREDTHKMAEANKAFAHYRW.

The protein belongs to the universal ribosomal protein uS7 family. Part of the 30S ribosomal subunit. Contacts proteins S9 and S11.

Its function is as follows. One of the primary rRNA binding proteins, it binds directly to 16S rRNA where it nucleates assembly of the head domain of the 30S subunit. Is located at the subunit interface close to the decoding center, probably blocks exit of the E-site tRNA. In Rhodococcus opacus (strain B4), this protein is Small ribosomal subunit protein uS7.